Consider the following 395-residue polypeptide: Univin (395 aa).

A signal peptide spans Met-1 to Ser-19. The propeptide occupies Ala-20–Arg-272. Asn-50 carries N-linked (GlcNAc...) asparagine glycosylation. The segment at Glu-69–Leu-97 is disordered. 2 N-linked (GlcNAc...) asparagine glycosylation sites follow: Asn-116 and Asn-336. 3 disulfides stabilise this stretch: Cys-294–Cys-360, Cys-323–Cys-392, and Cys-327–Cys-394.

The protein belongs to the TGF-beta family. Homodimer; disulfide-linked.

Its subcellular location is the secreted. In terms of biological role, could have a critical role in early developmental decisions in the sea urchin embryo. The chain is Univin from Strongylocentrotus purpuratus (Purple sea urchin).